The primary structure comprises 173 residues: Translocon-associated protein subunit delta (173 aa).

The N-terminal stretch at Met1–Ala23 is a signal peptide. The Lumenal segment spans residues Glu24–Gly144. Residues Cys26 and Cys57 are joined by a disulfide bond. A Glycyl lysine isopeptide (Lys-Gly) (interchain with G-Cter in ubiquitin) cross-link involves residue Lys73. Residues Pro145–Phe165 traverse the membrane as a helical segment. At Ser166–Ala173 the chain is on the cytoplasmic side.

The protein belongs to the TRAP-delta family. Heterotetramer of TRAP-alpha, TRAP-beta, TRAP-delta and TRAP-gamma.

Its subcellular location is the endoplasmic reticulum membrane. In terms of biological role, TRAP proteins are part of a complex whose function is to bind calcium to the ER membrane and thereby regulate the retention of ER resident proteins. The chain is Translocon-associated protein subunit delta (SSR4) from Homo sapiens (Human).